Here is a 273-residue protein sequence, read N- to C-terminus: Phosphate import ATP-binding protein PstB (273 aa).

The region spanning 17–259 (LSAENLSIFY…DKTNNIFQNP (243 aa)) is the ABC transporter domain. An ATP-binding site is contributed by 49 to 56 (GPSGCGKS).

It belongs to the ABC transporter superfamily. Phosphate importer (TC 3.A.1.7) family. The complex is composed of two ATP-binding proteins (PstB), two transmembrane proteins (PstC and PstA) and a solute-binding protein (PstS).

It localises to the cell inner membrane. The enzyme catalyses phosphate(out) + ATP + H2O = ADP + 2 phosphate(in) + H(+). Part of the ABC transporter complex PstSACB involved in phosphate import. Responsible for energy coupling to the transport system. The sequence is that of Phosphate import ATP-binding protein PstB from Trichodesmium erythraeum (strain IMS101).